The sequence spans 219 residues: 7-cyano-7-deazaguanine synthase (219 aa).

10–20 (FSGGQDSTTCL) provides a ligand contact to ATP. Cysteine 188, cysteine 197, cysteine 200, and cysteine 203 together coordinate Zn(2+).

The protein belongs to the QueC family. As to quaternary structure, homodimer. The cofactor is Zn(2+).

It carries out the reaction 7-carboxy-7-deazaguanine + NH4(+) + ATP = 7-cyano-7-deazaguanine + ADP + phosphate + H2O + H(+). The protein operates within purine metabolism; 7-cyano-7-deazaguanine biosynthesis. In terms of biological role, catalyzes the ATP-dependent conversion of 7-carboxy-7-deazaguanine (CDG) to 7-cyano-7-deazaguanine (preQ(0)). This is 7-cyano-7-deazaguanine synthase from Clostridium botulinum (strain Langeland / NCTC 10281 / Type F).